A 263-amino-acid polypeptide reads, in one-letter code: Oxidoreductase tpcG (263 aa).

The protein belongs to the avfA family. As to expression, specifically expressed in conidia.

It functions in the pathway secondary metabolite biosynthesis. Functionally, oxidoreductase; part of the gene cluster that mediates the biosynthesis of trypacidin, a mycotoxin with antiprotozoal activity and that plays a role in the infection process. The pathway begins with the synthesis of atrochrysone thioester by the polyketide synthase (PKS) tpcC. The atrochrysone carboxyl ACP thioesterase tpcB then breaks the thioester bond and releases the atrochrysone carboxylic acid from tpcC. The decarboxylase tpcK converts atrochrysone carboxylic acid to atrochrysone which is further reduced into emodin anthrone. The next step is performed by the emodin anthrone oxygenase tpcL that catalyzes the oxidation of emodinanthrone to emodin. Emodin O-methyltransferase encoded by tpcA catalyzes methylation of the 8-hydroxy group of emodin to form questin. Ring cleavage of questin by questin oxidase tpcI leads to desmethylsulochrin via several intermediates including questin epoxide. Another methylation step catalyzed by tpcM leads to the formation of sulochrin which is further converted to monomethylsulfochrin by tpcH. Finally, the tpcJ catalyzes the conversion of monomethylsulfochrin to trypacidin. Trypacidin is toxic for human pulmonary and bronchial epithelial cells by initiating the intracellular formation of nitric oxide (NO) and hydrogen peroxide (H(2)O(2)), thus triggering host necrotic cell death. The trypacidin pathway is also able to produce endocrocin via a distinct route from the endocrocin Enc pathway. This chain is Oxidoreductase tpcG, found in Aspergillus fumigatus (strain ATCC MYA-4609 / CBS 101355 / FGSC A1100 / Af293) (Neosartorya fumigata).